The sequence spans 89 residues: MSSGAETRGRKKSWLGKVVSDSMDKGIVVAVERRVQHPVYKKYFKKTTRLMAHDENNEAGVGDLVRITECRPLSKNKSCRLVEIVEKAK.

Belongs to the universal ribosomal protein uS17 family. As to quaternary structure, part of the 30S ribosomal subunit.

One of the primary rRNA binding proteins, it binds specifically to the 5'-end of 16S ribosomal RNA. The protein is Small ribosomal subunit protein uS17 of Chlorobaculum tepidum (strain ATCC 49652 / DSM 12025 / NBRC 103806 / TLS) (Chlorobium tepidum).